The primary structure comprises 389 residues: Alanine racemase (389 aa).

Lys-48 serves as the catalytic Proton acceptor; specific for D-alanine. Lys-48 carries the post-translational modification N6-(pyridoxal phosphate)lysine. Arg-144 is a substrate binding site. Catalysis depends on Tyr-281, which acts as the Proton acceptor; specific for L-alanine. Substrate is bound at residue Met-329.

The protein belongs to the alanine racemase family. Pyridoxal 5'-phosphate serves as cofactor.

The enzyme catalyses L-alanine = D-alanine. It participates in amino-acid biosynthesis; D-alanine biosynthesis; D-alanine from L-alanine: step 1/1. Functionally, catalyzes the interconversion of L-alanine and D-alanine. May also act on other amino acids. This Leptospira interrogans serogroup Icterohaemorrhagiae serovar copenhageni (strain Fiocruz L1-130) protein is Alanine racemase (alr).